The following is a 1331-amino-acid chain: Xanthine dehydrogenase/oxidase (1331 aa).

Positions 4–91 (DELVFFVNGK…HVAVTTVEGI (88 aa)) constitute a 2Fe-2S ferredoxin-type domain. Positions 43, 48, 51, 73, 112, 115, 147, and 149 each coordinate [2Fe-2S] cluster. The 186-residue stretch at 228–413 (FEGERVTWIQ…LSIEIPYSKE (186 aa)) folds into the FAD-binding PCMH-type domain. FAD is bound by residues 256 to 263 (LVVGNTEI), Phe336, 346 to 350 (SIGGN), Asp359, Leu403, and Lys421. Residues Cys535 and Cys992 are joined by a disulfide bond. Mo-molybdopterin is bound by residues Gln767 and Phe798. Glu802 and Arg880 together coordinate substrate. Residue Arg912 coordinates Mo-molybdopterin. Substrate is bound by residues Phe914 and Thr1010. Mo-molybdopterin is bound at residue Ala1079. The active-site Proton acceptor is the Glu1261.

It belongs to the xanthine dehydrogenase family. In terms of assembly, homodimer. Interacts with BTN1A1. The cofactor is [2Fe-2S] cluster. It depends on FAD as a cofactor. Mo-molybdopterin serves as cofactor. Post-translationally, subject to partial proteolysis; this alters the enzyme from the dehydrogenase form (D) to the oxidase form (O). Contains sulfhydryl groups that are easily oxidized (in vitro); this alters the enzyme from the dehydrogenase form (D) to the oxidase form (O).

The protein localises to the peroxisome. Its subcellular location is the cytoplasm. The protein resides in the secreted. The catalysed reaction is xanthine + NAD(+) + H2O = urate + NADH + H(+). It carries out the reaction hypoxanthine + NAD(+) + H2O = xanthine + NADH + H(+). It catalyses the reaction xanthine + O2 + H2O = urate + H2O2. Its activity is regulated as follows. Can be converted from the dehydrogenase form (D) to the oxidase form (O) irreversibly by proteolysis or reversibly through the oxidation of sulfhydryl groups. In terms of biological role, key enzyme in purine degradation. Catalyzes the oxidation of hypoxanthine to xanthine. Catalyzes the oxidation of xanthine to uric acid. Contributes to the generation of reactive oxygen species. This Rattus norvegicus (Rat) protein is Xanthine dehydrogenase/oxidase (Xdh).